The sequence spans 729 residues: Monosaccharide-sensing protein 2 (729 aa).

A run of 6 helical transmembrane segments spans residues 1-21 (MSGA…QGWD), 47-67 (LIVA…GGVA), 81-101 (ILYF…VLLL), 104-124 (LLDG…ISET), 139-159 (FTGS…SLMP), and 165-185 (LMLG…VFFL). Over residues 347-363 (VGEGEDYPSDHGDDSED) the composition is skewed to acidic residues. Disordered regions lie at residues 347–367 (VGEG…DLHS) and 423–442 (ERED…RRGS). A compositionally biased stretch (basic and acidic residues) spans 423 to 434 (EREDESGQKEEG). Ser438 and Gly448 each carry phosphoserine. 6 consecutive transmembrane segments (helical) span residues 507–527 (ALVV…NGVL), 553–573 (ASLL…AVAM), 585–605 (LLTT…SNLV), 610–630 (IVHA…FVMG), 650–670 (ICIA…TYSL), and 679–699 (LAGV…FVFI).

Belongs to the major facilitator superfamily. Sugar transporter (TC 2.A.1.1) family. In terms of tissue distribution, mostly expressed in roots and stems, and, to a lower extent, in juvenile and adult leaves, and in flower tissues.

It localises to the vacuole membrane. It carries out the reaction D-glucose(out) + H(+)(in) = D-glucose(in) + H(+)(out). The catalysed reaction is sucrose(out) + H(+)(in) = sucrose(in) + H(+)(out). Sugar proton-coupled antiporter which contributes to vacuolar sugar import (e.g. monosaccharides including glucose, sucrose and fructose), particularly during stress responses (e.g. in response to cold). This is Monosaccharide-sensing protein 2 from Arabidopsis thaliana (Mouse-ear cress).